Consider the following 428-residue polypeptide: Involucrin (428 aa).

Disordered regions lie at residues 1-128 and 140-398; these read MSQQ…EEKK and KRDD…GQAQ. A compositionally biased stretch (basic and acidic residues) spans 56–76; that stretch reads PSKHEEKHVTIVKGVPEHECE. Positions 77–92 are enriched in low complexity; sequence QQQQAQGQERQQQHWG. Composition is skewed to basic and acidic residues over residues 107–117, 162–174, and 192–208; these read LKQEEAQREKQ, QLKH…KPLE, and QLKH…HLEQ. Low complexity predominate over residues 209–218; sequence QEGQLELPEQ. A compositionally biased stretch (basic and acidic residues) spans 220–297; the sequence is DQPKHLEQLE…CEGQLEHLEQ (78 aa). A compositionally biased stretch (low complexity) spans 298–311; sequence QEGQLELPEQQVGQ. Composition is skewed to basic and acidic residues over residues 313 to 327, 352 to 366, and 374 to 385; these read KHLE…HPEQ and QLKDLEQQERQL.

It belongs to the involucrin family. Directly or indirectly cross-linked to cornifelin (CNFN). Post-translationally, substrate of transglutaminase. Specific glutamines or lysines are cross-linked to keratins, desmoplakin and to inter involucrin molecules. As to expression, keratinocytes of epidermis and other stratified squamous epithelia.

The protein resides in the cytoplasm. Its function is as follows. Part of the insoluble cornified cell envelope (CE) of stratified squamous epithelia. This is Involucrin (IVL) from Cebus albifrons (White-fronted capuchin).